Consider the following 1072-residue polypeptide: Error-prone DNA polymerase (1072 aa).

It belongs to the DNA polymerase type-C family. DnaE2 subfamily.

It localises to the cytoplasm. It catalyses the reaction DNA(n) + a 2'-deoxyribonucleoside 5'-triphosphate = DNA(n+1) + diphosphate. In terms of biological role, DNA polymerase involved in damage-induced mutagenesis and translesion synthesis (TLS). It is not the major replicative DNA polymerase. The sequence is that of Error-prone DNA polymerase from Burkholderia pseudomallei (strain K96243).